Consider the following 426-residue polypeptide: 3-phosphoshikimate 1-carboxyvinyltransferase (426 aa).

3-phosphoshikimate-binding residues include K21, S22, and R26. Residue K21 participates in phosphoenolpyruvate binding. Positions 92 and 122 each coordinate phosphoenolpyruvate. Residues S167, S168, Q169, S195, D315, and K342 each coordinate 3-phosphoshikimate. Phosphoenolpyruvate is bound at residue Q169. D315 functions as the Proton acceptor in the catalytic mechanism. Residues R346 and R386 each coordinate phosphoenolpyruvate.

Belongs to the EPSP synthase family. Monomer.

The protein localises to the cytoplasm. The catalysed reaction is 3-phosphoshikimate + phosphoenolpyruvate = 5-O-(1-carboxyvinyl)-3-phosphoshikimate + phosphate. It participates in metabolic intermediate biosynthesis; chorismate biosynthesis. Catalyzes the transfer of the enolpyruvyl moiety of phosphoenolpyruvate (PEP) to the 5-hydroxyl of shikimate-3-phosphate (S3P) to produce enolpyruvyl shikimate-3-phosphate and inorganic phosphate. This Methanosphaera stadtmanae (strain ATCC 43021 / DSM 3091 / JCM 11832 / MCB-3) protein is 3-phosphoshikimate 1-carboxyvinyltransferase.